The following is a 276-amino-acid chain: F420-dependent methylenetetrahydromethanopterin dehydrogenase (276 aa).

It belongs to the MTD family.

It catalyses the reaction 5,10-methylenetetrahydromethanopterin + oxidized coenzyme F420-(gamma-L-Glu)(n) + 2 H(+) = 5,10-methenyl-5,6,7,8-tetrahydromethanopterin + reduced coenzyme F420-(gamma-L-Glu)(n). The protein operates within one-carbon metabolism; methanogenesis from CO(2); 5,10-methylene-5,6,7,8-tetrahydromethanopterin from 5,10-methenyl-5,6,7,8-tetrahydromethanopterin (coenzyme F420 route): step 1/1. In terms of biological role, catalyzes the reversible reduction of methenyl-H(4)MPT(+) to methylene-H(4)MPT. The chain is F420-dependent methylenetetrahydromethanopterin dehydrogenase from Methanococcus vannielii (strain ATCC 35089 / DSM 1224 / JCM 13029 / OCM 148 / SB).